The following is a 175-amino-acid chain: Disulfide bond formation protein B (175 aa).

The Cytoplasmic portion of the chain corresponds to 1-13; sequence MTAFTRFAHSRAS. The helical transmembrane segment at 14 to 30 threads the bilayer; that stretch reads WLILTGSAIALEAAALY. Topologically, residues 31–48 are periplasmic; it reads FQYVMKLDPCVMCIYQRL. Cys40 and Cys43 are oxidised to a cystine. A helical transmembrane segment spans residues 49-64; the sequence is AVFGILAAGLIGMTAP. Over 65–71 the chain is Cytoplasmic; sequence KYRIVRI. Residues 72-89 form a helical membrane-spanning segment; it reads LGALGWAVSATWGLKLAL. At 90 to 144 the chain is on the periplasmic side; that stretch reads ALVDMQNNPSPFSTCSFLPEFPAWMPLHEWFPSVMLPTGMCTDVPWQFMGVTMAE. A disulfide bridge links Cys104 with Cys130. The helical transmembrane segment at 145–163 threads the bilayer; sequence WMVVAFSGYLVALLLFIVP. Topologically, residues 164 to 175 are cytoplasmic; the sequence is ILSGSNKPSLYK.

This sequence belongs to the DsbB family.

Its subcellular location is the cell inner membrane. Functionally, required for disulfide bond formation in some periplasmic proteins. Acts by oxidizing the DsbA protein. This chain is Disulfide bond formation protein B, found in Shewanella sp. (strain MR-4).